Consider the following 505-residue polypeptide: uncharacterized protein (505 aa).

Transmembrane regions (helical) follow at residues 9–29, 49–69, 86–106, 122–142, 156–176, 181–201, 235–255, 261–281, 310–330, 341–361, 371–391, 395–415, 435–455, and 464–484; these read ANLTAFLLSVFLSVWMTPFIV, YFSVITVALSSVVVRFFSVAA, AASVLISLLLLLPLAGSAFFI, LSILIGSVLFILTFLMAGFGA, IQAVQMLIRVLSVLLLFACFA, QIQLAALAGAVIASVLSFYFF, IGVLLFLQIDLLTANLMLGAS, AAIIQFPLLLRSLAGTVASLF, LLLALPAALLGGLAGPFLTIW, LLFIHAGYLVVSLAFMPLFYI, PAIVTLLLGAVNVVLAVTLSG, LGLYGITLAGAISLILKNAIF, IIGPLSAAVFAWTVCKAIQFI, and LIATGVTVSFCYAVFAFMLVC.

It localises to the cell membrane. Its function is as follows. May be involved in the production of the exopolysaccharide (EPS) component of the extracellular matrix during biofilm formation. EPS is responsible for the adhesion of chains of cells into bundles. This is an uncharacterized protein from Bacillus subtilis (strain 168).